A 562-amino-acid polypeptide reads, in one-letter code: Catalase T (562 aa).

Active-site residues include His64 and Asn137. Position 351 (Tyr351) interacts with heme.

It belongs to the catalase family. Homotetramer. It depends on heme as a cofactor.

The protein localises to the cytoplasm. The catalysed reaction is 2 H2O2 = O2 + 2 H2O. Functionally, occurs in almost all aerobically respiring organisms and serves to protect cells from the toxic effects of hydrogen peroxide. The polypeptide is Catalase T (CTT1) (Saccharomyces cerevisiae (strain YJM789) (Baker's yeast)).